Here is a 208-residue protein sequence, read N- to C-terminus: Putative 3-methyladenine DNA glycosylase (208 aa).

This sequence belongs to the DNA glycosylase MPG family.

The polypeptide is Putative 3-methyladenine DNA glycosylase (Prosthecochloris aestuarii (strain DSM 271 / SK 413)).